We begin with the raw amino-acid sequence, 179 residues long: Large ribosomal subunit protein uL5 (179 aa).

Belongs to the universal ribosomal protein uL5 family. In terms of assembly, part of the 50S ribosomal subunit; part of the 5S rRNA/L5/L18/L25 subcomplex. Contacts the 5S rRNA and the P site tRNA. Forms a bridge to the 30S subunit in the 70S ribosome.

This is one of the proteins that bind and probably mediate the attachment of the 5S RNA into the large ribosomal subunit, where it forms part of the central protuberance. In the 70S ribosome it contacts protein S13 of the 30S subunit (bridge B1b), connecting the 2 subunits; this bridge is implicated in subunit movement. Contacts the P site tRNA; the 5S rRNA and some of its associated proteins might help stabilize positioning of ribosome-bound tRNAs. The polypeptide is Large ribosomal subunit protein uL5 (Staphylococcus carnosus (strain TM300)).